The chain runs to 492 residues: NAD(P)H-quinone oxidoreductase subunit 2 A, chloroplastic (492 aa).

The next 13 helical transmembrane spans lie at 6–26 (LLLFHGSFIFPECILIFGLIL), 39–59 (TPWLYFISSTSLVMSITALLF), 81–101 (VFQFLILLCSTLCIPLSVEYI), 106–126 (MAITEFLLFVLTATLGGMFLC), 131–151 (LITIFVAPECFSLCSYLLSGY), 165–185 (YLLMGGASSSILVHGFSWLYG), 209–229 (PGISIALISITVGIGFKLSPA), 277–297 (WHLLLEILAILSMILGNLIAI), 305–325 (MLAYSSIGQIGYVIIGIIVGD), 329–349 (GYASMITYMLFYISMNLGTFA), 377–397 (ALSSALCLLSLGGIPPLAGFF), 400–420 (LHLFWCGWQAGLYFLVSIGLL), and 466–486 (MIVCVIASTIPGISMNPIIAI).

It belongs to the complex I subunit 2 family. As to quaternary structure, NDH is composed of at least 16 different subunits, 5 of which are encoded in the nucleus.

Its subcellular location is the plastid. It is found in the chloroplast thylakoid membrane. It carries out the reaction a plastoquinone + NADH + (n+1) H(+)(in) = a plastoquinol + NAD(+) + n H(+)(out). It catalyses the reaction a plastoquinone + NADPH + (n+1) H(+)(in) = a plastoquinol + NADP(+) + n H(+)(out). NDH shuttles electrons from NAD(P)H:plastoquinone, via FMN and iron-sulfur (Fe-S) centers, to quinones in the photosynthetic chain and possibly in a chloroplast respiratory chain. The immediate electron acceptor for the enzyme in this species is believed to be plastoquinone. Couples the redox reaction to proton translocation, and thus conserves the redox energy in a proton gradient. This chain is NAD(P)H-quinone oxidoreductase subunit 2 A, chloroplastic, found in Illicium oligandrum (Star anise).